The primary structure comprises 473 residues: Glutamate--tRNA ligase (473 aa).

Residues 10–20 carry the 'HIGH' region motif; that stretch reads PSPTGYLHLGN. Residues C98, C100, C125, and H127 each coordinate Zn(2+). The 'KMSKS' region motif lies at 242 to 246; that stretch reads KLSKR. K245 is a binding site for ATP.

The protein belongs to the class-I aminoacyl-tRNA synthetase family. Glutamate--tRNA ligase type 1 subfamily. Monomer. Zn(2+) serves as cofactor.

It is found in the cytoplasm. It carries out the reaction tRNA(Glu) + L-glutamate + ATP = L-glutamyl-tRNA(Glu) + AMP + diphosphate. Functionally, catalyzes the attachment of glutamate to tRNA(Glu) in a two-step reaction: glutamate is first activated by ATP to form Glu-AMP and then transferred to the acceptor end of tRNA(Glu). This Aquifex aeolicus (strain VF5) protein is Glutamate--tRNA ligase.